A 520-amino-acid polypeptide reads, in one-letter code: Zinc finger and BTB domain-containing protein 18 (520 aa).

A BTB domain is found at 24–91; it reads CDCTVLVGDA…MYEGILQFKG (68 aa). The interval 121-140 is disordered; it reads ATTDSTKKEEDTSSFSDKVE. C2H2-type zinc fingers lie at residues 368–390, 408–430, 436–458, and 464–487; these read FMCP…LSTH, PTCS…ERTH, YTCT…AVVH, and HACK…RKFH.

It belongs to the krueppel C2H2-type zinc-finger protein family. ZBTB18 subfamily.

The protein localises to the nucleus. In terms of biological role, transcriptional repressor that plays a role in various developmental processes. Specifically binds the consensus DNA sequence 5'-[AC]ACATCTG[GT][AC]-3' which contains the E box core, and acts by recruiting chromatin remodeling multiprotein complexes. This chain is Zinc finger and BTB domain-containing protein 18 (zbtb18), found in Xenopus laevis (African clawed frog).